The chain runs to 255 residues: Phycoerythrobilin:ferredoxin oxidoreductase (255 aa).

The protein belongs to the HY2 family.

The catalysed reaction is (3Z)-phycoerythrobilin + oxidized 2[4Fe-4S]-[ferredoxin] = 15,16-dihydrobiliverdin + reduced 2[4Fe-4S]-[ferredoxin] + 2 H(+). In terms of biological role, catalyzes the two-electron reduction of the C2 and C3(1) diene system of 15,16-dihydrobiliverdin. The chain is Phycoerythrobilin:ferredoxin oxidoreductase (pebB) from Nostoc punctiforme (strain ATCC 29133 / PCC 73102).